The following is a 447-amino-acid chain: Tubulin beta-5 chain (447 aa).

The GTP site is built by glutamine 11, glutamate 69, serine 138, glycine 142, threonine 143, glycine 144, asparagine 204, and asparagine 226. Glutamate 69 is a binding site for Mg(2+). The segment at 421–447 (EYQQYQDATADDEEEDYGDEEEDEVAA) is disordered. The span at 429–447 (TADDEEEDYGDEEEDEVAA) shows a compositional bias: acidic residues.

Belongs to the tubulin family. Dimer of alpha and beta chains. A typical microtubule is a hollow water-filled tube with an outer diameter of 25 nm and an inner diameter of 15 nM. Alpha-beta heterodimers associate head-to-tail to form protofilaments running lengthwise along the microtubule wall with the beta-tubulin subunit facing the microtubule plus end conferring a structural polarity. Microtubules usually have 13 protofilaments but different protofilament numbers can be found in some organisms and specialized cells. Mg(2+) serves as cofactor. In terms of tissue distribution, expressed in roots, leaf sheaths, and suspension cultured cells.

The protein resides in the cytoplasm. The protein localises to the cytoskeleton. Tubulin is the major constituent of microtubules, a cylinder consisting of laterally associated linear protofilaments composed of alpha- and beta-tubulin heterodimers. Microtubules grow by the addition of GTP-tubulin dimers to the microtubule end, where a stabilizing cap forms. Below the cap, tubulin dimers are in GDP-bound state, owing to GTPase activity of alpha-tubulin. This chain is Tubulin beta-5 chain (TUBB5), found in Oryza sativa subsp. japonica (Rice).